The following is a 65-amino-acid chain: Large ribosomal subunit protein bL35 (65 aa).

The tract at residues 24–48 (RRKAGKSHLLEHKSSDKKRSMSKTT) is disordered. Positions 31–42 (HLLEHKSSDKKR) are enriched in basic and acidic residues.

The protein belongs to the bacterial ribosomal protein bL35 family.

In Nostoc punctiforme (strain ATCC 29133 / PCC 73102), this protein is Large ribosomal subunit protein bL35.